Consider the following 192-residue polypeptide: Probable cobalt-precorrin-6B C(15)-methyltransferase (decarboxylating) (192 aa).

S-adenosyl-L-methionine contacts are provided by residues T20, 44–48 (GSGTG), E68, and A96.

This sequence belongs to the methyltransferase superfamily. Archaeal-type CbiT family.

The enzyme catalyses Co-precorrin-6B + S-adenosyl-L-methionine = Co-precorrin-7 + S-adenosyl-L-homocysteine + CO2. It functions in the pathway cofactor biosynthesis; adenosylcobalamin biosynthesis; cob(II)yrinate a,c-diamide from sirohydrochlorin (anaerobic route): step 8/10. Its function is as follows. Catalyzes the methylation of C-15 in cobalt-precorrin-6B followed by the decarboxylation of C-12 to form cobalt-precorrin-7. In Sulfolobus acidocaldarius (strain ATCC 33909 / DSM 639 / JCM 8929 / NBRC 15157 / NCIMB 11770), this protein is Probable cobalt-precorrin-6B C(15)-methyltransferase (decarboxylating).